The sequence spans 351 residues: N6-Methyl-AMP deaminase (351 aa).

Residues histidine 23 and histidine 25 each contribute to the Zn(2+) site. Residues histidine 25, asparagine 27, histidine 73, 105 to 108 (STPR), aspartate 147, and glycine 180 contribute to the N(6)-methyl-AMP site. Position 207 (histidine 207) interacts with Zn(2+). Glutamate 210, aspartate 292, and aspartate 293 together coordinate N(6)-methyl-AMP. Glutamate 210 functions as the Proton donor in the catalytic mechanism. Aspartate 292 is a Zn(2+) binding site.

It belongs to the metallo-dependent hydrolases superfamily. Adenosine and AMP deaminases family. As to quaternary structure, monomer. Zn(2+) serves as cofactor.

The catalysed reaction is N(6)-methyl-AMP + H2O + H(+) = IMP + methylamine. Functionally, catalyzes the hydrolysis of the free cytosolic methylated adenosine nucleotide N(6)-methyl-AMP (N6-mAMP) to produce inositol monophosphate (IMP) and methylamine. Is required for the catabolism of cytosolic N6-mAMP, which is derived from the degradation of mRNA containing N6-methylated adenine (m6A). The sequence is that of N6-Methyl-AMP deaminase from Bos taurus (Bovine).